The primary structure comprises 39 residues: uncharacterized protein (39 aa).

A compositionally biased stretch (polar residues) spans 1-16 (MLNIQPTQSIVNNQPK). The interval 1-39 (MLNIQPTQSIVNNQPKSDQKKQKPADLLKEFYDKTGNRN) is disordered. The segment covering 17–39 (SDQKKQKPADLLKEFYDKTGNRN) has biased composition (basic and acidic residues).

This is an uncharacterized protein from Dictyostelium discoideum (Social amoeba).